The primary structure comprises 302 residues: DDRGK domain-containing protein 1 (302 aa).

Over 1–5 (MDGGG) the chain is Lumenal. Residues 6–26 (GMLGAVVCLLLVFAIFPLLLW) form a helical membrane-spanning segment. Residues 27 to 302 (RRRSDAAHRL…DENAAAGTEL (276 aa)) are Cytoplasmic-facing. Disordered stretches follow at residues 36 to 151 (LPPQ…EEAR) and 279 to 302 (DLEPKPQYNEESNLDENAAAGTEL). A compositionally biased stretch (acidic residues) spans 79-91 (VDDADSDLEEEIQ). The segment covering 103–151 (KRQDREAQRQAEEAARDSRRTKQDRYAEMRRKKDEEREAQERLMEEEAR) has biased composition (basic and acidic residues).

Belongs to the DDRGK1 family.

The protein localises to the endoplasmic reticulum membrane. Functionally, substrate adapter for ufmylation, the covalent attachment of the ubiquitin-like modifier UFM1 to substrate proteins. The protein is DDRGK domain-containing protein 1 of Oryza sativa subsp. japonica (Rice).